We begin with the raw amino-acid sequence, 248 residues long: Myelin protein P0 (248 aa).

The signal sequence occupies residues 1 to 29 (MAPGAPSSSPSPILAALLFSSLVLSPTLA). The Ig-like V-type domain occupies 30-143 (IVVYTDREVY…DIVGKTSQVT (114 aa)). The Extracellular segment spans residues 30-153 (IVVYTDREVY…LYVFEKVPTR (124 aa)). Cysteine 50 and cysteine 127 form a disulfide bridge. The N-linked (GlcNAc...) (complex) asparagine glycan is linked to asparagine 122. A helical membrane pass occupies residues 154 to 179 (YGVVLGAVIGGILGVVLLLLLLFYLI). Residues 180 to 248 (RYCWLRRQAA…GLGESRKDKK (69 aa)) are Cytoplasmic-facing. Serine 210 carries the phosphoserine; by PKC modification. The segment at 222–248 (MLDHSRSTKAASEKKSKGLGESRKDKK) is disordered. Basic and acidic residues predominate over residues 224–248 (DHSRSTKAASEKKSKGLGESRKDKK). 2 positions are modified to phosphoserine: serine 226 and serine 228. The residue at position 233 (serine 233) is a Phosphoserine; by PKC. Phosphoserine is present on serine 237. Serine 243 carries the phosphoserine; by PKC modification.

This sequence belongs to the myelin P0 protein family. As to quaternary structure, homodimer and homotetramer. Post-translationally, N-glycosylated; contains sulfate-substituted glycan. Found only in peripheral nervous system Schwann cells.

The protein resides in the cell membrane. Is an adhesion molecule necessary for normal myelination in the peripheral nervous system. It mediates adhesion between adjacent myelin wraps and ultimately drives myelin compaction. In Rattus norvegicus (Rat), this protein is Myelin protein P0 (Mpz).